An 823-amino-acid chain; its full sequence is Protein phosphatase 1 regulatory subunit 29 (823 aa).

A signal peptide spans 1–22; it reads MLRLGLCAAALLCVCQPGAVRA. The Extracellular segment spans residues 23–397; the sequence is DCWLIEGDKG…APSTSTTTHY (375 aa). N54 carries an N-linked (GlcNAc...) asparagine glycan. LRR repeat units follow at residues 56-77, 80-101, 104-125, 128-149, and 152-173; these read TVHD…SLNR, NLTD…AFLG, SLQV…MLRG, RLQF…AFSE, and SLIS…TFAS. Residues N80, N85, and N117 are each glycosylated (N-linked (GlcNAc...) asparagine). Residues 185–247 form the LRRCT domain; it reads NPFNCECDLF…ITVLQAKCRN (63 aa). N205 and N247 each carry an N-linked (GlcNAc...) asparagine glycan. A disordered region spans residues 249 to 294; the sequence is SMPARPVSHPTPYSTDAQREPDENSGFNPDEILSVEPPASSTTDAS. One can recognise a Fibronectin type-III domain in the interval 292–379; the sequence is DASAGPAIKL…FNHTCLTFTT (88 aa). The chain crosses the membrane as a helical span at residues 398–418; it reads IMTILGCLFGMVIVLGAVYYC. Residues 419–823 are Cytoplasmic-facing; it reads LRKRRMQEEK…WKGVSAQQKL (405 aa). The segment at 590–624 is disordered; it reads ASSAATPGALERPSFLSPPYKESSHHPLQRQLSAD. S622, S671, and S675 each carry phosphoserine.

As to quaternary structure, interacts with PPP1CA.

It is found in the membrane. Inhibits phosphatase activity of protein phosphatase 1 (PP1) complexes. This Mus musculus (Mouse) protein is Protein phosphatase 1 regulatory subunit 29 (Elfn2).